The following is a 330-amino-acid chain: Ribose-phosphate pyrophosphokinase (330 aa).

55–57 (DGE) is a binding site for ATP. Positions 148 and 187 each coordinate Mg(2+). Residue Lys211 is part of the active site. D-ribose 5-phosphate contacts are provided by residues Arg213, Asp237, and 241-245 (DTGGT).

The protein belongs to the ribose-phosphate pyrophosphokinase family. Class I subfamily. Homohexamer. Mg(2+) serves as cofactor.

The protein resides in the cytoplasm. The enzyme catalyses D-ribose 5-phosphate + ATP = 5-phospho-alpha-D-ribose 1-diphosphate + AMP + H(+). The protein operates within metabolic intermediate biosynthesis; 5-phospho-alpha-D-ribose 1-diphosphate biosynthesis; 5-phospho-alpha-D-ribose 1-diphosphate from D-ribose 5-phosphate (route I): step 1/1. In terms of biological role, involved in the biosynthesis of the central metabolite phospho-alpha-D-ribosyl-1-pyrophosphate (PRPP) via the transfer of pyrophosphoryl group from ATP to 1-hydroxyl of ribose-5-phosphate (Rib-5-P). The chain is Ribose-phosphate pyrophosphokinase from Nostoc sp. (strain PCC 7120 / SAG 25.82 / UTEX 2576).